The primary structure comprises 2033 residues: Major viral transcription factor ICP4 homolog (2033 aa).

The span at 1-16 shows a compositional bias: low complexity; it reads MFWHQPRQQQLRQLQR. Disordered regions lie at residues 1–47, 95–145, 157–199, 218–240, 277–301, 313–338, 350–461, 505–527, 719–747, 1015–1064, 1085–1186, 1294–1342, 1420–1451, 1531–1612, 1636–1655, 1664–1718, and 1746–2033; these read MFWH…PPSP, FSDP…LPAP, LSSS…GSSY, PPRSVPDCRRGEPVSEDGMADRC, DQSPRGLGAEPHVAEAGRPSSCVGE, EERKEAARRSPDAERNDDEEEYESLP, AEIN…GAVA, SFAQRQQPRQQQHAPRNKPARQR, LPPDGGDDRDGGGKSRGGRGGGSKDASRT, GKQS…GALN, LLSD…PGDP, ETWR…EGGT, ASPHRGVGGKHRDKRPCLAEGTPSAPSCRDAA, VVFP…PPAA, RFDEADGEDPLPPAACGGKP, LCEQ…SPSP, and EISP…GTER. The segment covering 157–173 has biased composition (low complexity); the sequence is LSSSSPSGSSRGSVTSP. Over residues 223 to 240 the composition is skewed to basic and acidic residues; it reads PDCRRGEPVSEDGMADRC. A compositionally biased stretch (basic and acidic residues) spans 313-326; it reads EERKEAARRSPDAE. Positions 359 to 368 are enriched in acidic residues; sequence ESDEAEDEDA. A compositionally biased stretch (low complexity) spans 507 to 518; sequence AQRQQPRQQQHA. Over residues 732–741 the composition is skewed to gly residues; it reads KSRGGRGGGS. The span at 1031–1056 shows a compositional bias: low complexity; it reads RATASSPRTPASRPPHGSAAAPPSGR. Acidic residues predominate over residues 1086 to 1097; the sequence is LSDEAGTDDDGD. Residues 1169–1181 are compositionally biased toward low complexity; sequence SSSSFASSSLASA. Over residues 1294–1303 the composition is skewed to basic and acidic residues; it reads ETWRDAEDHP. A compositionally biased stretch (basic and acidic residues) spans 1575-1591; that stretch reads SHDRSPSSSSRRRDGRP. A compositionally biased stretch (basic residues) spans 1592–1602; it reads SSRRRPSRRMS. 2 stretches are compositionally biased toward basic and acidic residues: residues 1752–1765 and 1774–1795; these read RRRDAEGRRFGCRQ and EGGRESPERVLGRRQSRRDSVP. Residues 1812 to 1843 are compositionally biased toward low complexity; that stretch reads SAGRSSSSSSSSSSSSSSSPSSRPSRSATPSL. Residues 1853-1869 are compositionally biased toward basic and acidic residues; that stretch reads APVDRSRSGRRRERDRP. Polar residues predominate over residues 1912–1921; the sequence is TPSSATTLPS. Over residues 1927–1936 the composition is skewed to acidic residues; it reads DSVDETETED. A compositionally biased stretch (low complexity) spans 1937–1948; that stretch reads SAPPARLAPSPL.

This sequence belongs to the herpesviridae ICP4 family. Post-translationally, a long stretch of serine residues may be a major site of phosphorylation.

The protein resides in the host nucleus. In terms of biological role, this IE protein is a multifunctional protein capable of migrating to the nucleus, binding to DNA, trans-activating other viral genes, and autoregulating its own synthesis. It is required for the switch from immediate-early to early mode of gene expression. The polypeptide is Major viral transcription factor ICP4 homolog (ICP4B) (Amazona oratrix (yellow-headed parrot)).